Consider the following 146-residue polypeptide: Phospholipase A2 PS22 (146 aa).

An N-terminal signal peptide occupies residues 1–19 (MYPAHLLVLLAVCVSLLGA). Residues 20-27 (ASVPPQPL) constitute a propeptide that is removed on maturation. 7 disulfides stabilise this stretch: C38–C98, C54–C145, C56–C72, C71–C126, C78–C119, C87–C112, and C105–C117. Residues Y55, G57, and G59 each coordinate Ca(2+). H75 is a catalytic residue. D76 provides a ligand contact to Ca(2+). D120 is an active-site residue.

The protein belongs to the phospholipase A2 family. Group I subfamily. D49 sub-subfamily. The cofactor is Ca(2+). In terms of tissue distribution, expressed by the venom gland.

The protein resides in the secreted. The catalysed reaction is a 1,2-diacyl-sn-glycero-3-phosphocholine + H2O = a 1-acyl-sn-glycero-3-phosphocholine + a fatty acid + H(+). Functionally, snake venom phospholipase A2 (PLA2) that inhibits collagen-induced platelet aggregation. PLA2 catalyzes the calcium-dependent hydrolysis of the 2-acyl groups in 3-sn-phosphoglycerides. This chain is Phospholipase A2 PS22, found in Drysdalia coronoides (White-lipped snake).